The chain runs to 436 residues: MSTGFFGDIAKVKYEGPDSTNPLAFRHYNKDEVVLGKRMEDHLRFAVAYWHTFTWPGGDPFGGQTFLRPWFNETMEAAKLKADVAFEFFTLLGSPYYCFHDADVRPEGKNFAENTKNLNEIVDYFAQKQADTGVKLLWGTANLFSNRRFMSGAATNPDPDVFAFSAATVKTCMDATHKLGGENYVLWGGREGYETLLNTDLKRELDQMGRFLNLVVEYKHKIGFKGAILIEPKPQEPTKHQYDYDVATVYGFLKKNGLENEVKLNIEQGHAILAGHSFEHELALANALGIFGSIDMNRNDYQSGWDTDQFPNNVPEMSLAYYQVLAGGGFKSGGTNFDSKLRRQSLDPADLLIGHIGGMDCCARGLKAAAKMIEDKALSQPLADRYAGWDSAEGQKLLRGEYSLDQIAQWVEAKDINPQPKSGKQELLENIVNRYV.

Mg(2+) is bound by residues Asp-306 and Asp-308.

It belongs to the xylose isomerase family. In terms of assembly, homotetramer. It depends on Mg(2+) as a cofactor.

The protein localises to the cytoplasm. The catalysed reaction is alpha-D-xylose = alpha-D-xylulofuranose. The protein is Xylose isomerase of Rhizobium rhizogenes (strain K84 / ATCC BAA-868) (Agrobacterium radiobacter).